The following is a 118-amino-acid chain: Large ribosomal subunit protein bL20 (118 aa).

It belongs to the bacterial ribosomal protein bL20 family.

Its function is as follows. Binds directly to 23S ribosomal RNA and is necessary for the in vitro assembly process of the 50S ribosomal subunit. It is not involved in the protein synthesizing functions of that subunit. In Kosmotoga olearia (strain ATCC BAA-1733 / DSM 21960 / TBF 19.5.1), this protein is Large ribosomal subunit protein bL20.